The following is a 333-amino-acid chain: Fructose-1,6-bisphosphatase class 1 (333 aa).

Glu90, Asp112, Leu114, and Asp115 together coordinate Mg(2+). Substrate contacts are provided by residues 115–118, Asn207, and Lys273; that span reads DGSS. Position 279 (Glu279) interacts with Mg(2+).

Belongs to the FBPase class 1 family. In terms of assembly, homotetramer. Mg(2+) serves as cofactor.

The protein resides in the cytoplasm. The catalysed reaction is beta-D-fructose 1,6-bisphosphate + H2O = beta-D-fructose 6-phosphate + phosphate. The protein operates within carbohydrate biosynthesis; gluconeogenesis. This is Fructose-1,6-bisphosphatase class 1 from Aromatoleum aromaticum (strain DSM 19018 / LMG 30748 / EbN1) (Azoarcus sp. (strain EbN1)).